The sequence spans 145 residues: D-aminoacyl-tRNA deacylase (145 aa).

The short motif at 137–138 (GP) is the Gly-cisPro motif, important for rejection of L-amino acids element.

This sequence belongs to the DTD family. As to quaternary structure, homodimer.

Its subcellular location is the cytoplasm. It carries out the reaction glycyl-tRNA(Ala) + H2O = tRNA(Ala) + glycine + H(+). The catalysed reaction is a D-aminoacyl-tRNA + H2O = a tRNA + a D-alpha-amino acid + H(+). In terms of biological role, an aminoacyl-tRNA editing enzyme that deacylates mischarged D-aminoacyl-tRNAs. Also deacylates mischarged glycyl-tRNA(Ala), protecting cells against glycine mischarging by AlaRS. Acts via tRNA-based rather than protein-based catalysis; rejects L-amino acids rather than detecting D-amino acids in the active site. By recycling D-aminoacyl-tRNA to D-amino acids and free tRNA molecules, this enzyme counteracts the toxicity associated with the formation of D-aminoacyl-tRNA entities in vivo and helps enforce protein L-homochirality. In Shewanella baltica (strain OS195), this protein is D-aminoacyl-tRNA deacylase.